A 338-amino-acid chain; its full sequence is Nucleoid-associated protein CGSHiGG_07705 (338 aa).

The protein belongs to the YejK family.

It localises to the cytoplasm. The protein localises to the nucleoid. The chain is Nucleoid-associated protein CGSHiGG_07705 from Haemophilus influenzae (strain PittGG).